The sequence spans 504 residues: Glycine--tRNA ligase (504 aa).

The substrate site is built by R99 and E189. ATP-binding positions include 221–223, 231–236, 306–307, and 365–368; these read RNE, FRVREL, EI, and GVDR. 236–240 contributes to the substrate binding site; that stretch reads LEQME. 361–365 is a binding site for substrate; the sequence is EPSAG.

This sequence belongs to the class-II aminoacyl-tRNA synthetase family. In terms of assembly, homodimer.

The protein resides in the cytoplasm. The catalysed reaction is tRNA(Gly) + glycine + ATP = glycyl-tRNA(Gly) + AMP + diphosphate. Functionally, catalyzes the attachment of glycine to tRNA(Gly). The polypeptide is Glycine--tRNA ligase (Deinococcus geothermalis (strain DSM 11300 / CIP 105573 / AG-3a)).